A 351-amino-acid polypeptide reads, in one-letter code: Mannonate dehydratase (351 aa).

This sequence belongs to the mannonate dehydratase family. Fe(2+) is required as a cofactor. The cofactor is Mn(2+).

It carries out the reaction D-mannonate = 2-dehydro-3-deoxy-D-gluconate + H2O. It participates in carbohydrate metabolism; pentose and glucuronate interconversion. In terms of biological role, catalyzes the dehydration of D-mannonate. In Clostridium acetobutylicum (strain ATCC 824 / DSM 792 / JCM 1419 / IAM 19013 / LMG 5710 / NBRC 13948 / NRRL B-527 / VKM B-1787 / 2291 / W), this protein is Mannonate dehydratase.